We begin with the raw amino-acid sequence, 418 residues long: MKFAIESISKNSGRLGQLRIKDGGPELKTPLLLQTTKGGSIPWLSADVFESHVSQKPQVLQFTLSTMDQMTEALTHWNSGGGNGLSGYVGLPGHLNILMVRDPCETTLSGGNDRDIMPLFTRRGKESLSSERYMEMVASFKPDIYQGLCDADTNLDSAKKRIQKSVDRTEKFMHYIYEHRCKVNSTLLAPIVGGYNTFARTQSIKHAREQPAGSYGGYIFEGFHTNGLTATTLDTSKLLPIVEHCVKQLEEDKPRILPGAYTPLTILELIRQGIDVFDSSYAYCASLNFKALTFSFVQDAVEHVPFLDITDEAIKEDFTPPLSECSCLTCQKHTRAYLHHLYKTNELLGPILLMVHNIHHYMAFFEEIRESVAKDALPQLTELVRNQNGKTQVDYSIAANNKVISKATMGKGFAAAAV.

Positions 325, 327, 330, and 356 each coordinate Zn(2+).

The protein belongs to the queuine tRNA-ribosyltransferase family. QTRT2 subfamily. Heterodimer of a catalytic subunit and an accessory subunit. It depends on Zn(2+) as a cofactor.

It is found in the cytoplasm. Functionally, non-catalytic subunit of the queuine tRNA-ribosyltransferase (TGT) that catalyzes the base-exchange of a guanine (G) residue with queuine (Q) at position 34 (anticodon wobble position) in tRNAs with GU(N) anticodons (tRNA-Asp, -Asn, -His and -Tyr), resulting in the hypermodified nucleoside queuosine (7-(((4,5-cis-dihydroxy-2-cyclopenten-1-yl)amino)methyl)-7-deazaguanosine). In Drosophila erecta (Fruit fly), this protein is Queuine tRNA-ribosyltransferase accessory subunit 2.